The chain runs to 412 residues: NFATC2-interacting protein (412 aa).

The disordered stretch occupies residues 1 to 38; it reads MAEPLRGRGPRSRGGRGARRARGARGRCPRARQSPARL. Residues 8–30 are compositionally biased toward basic residues; that stretch reads RGPRSRGGRGARRARGARGRCPR. 5 positions are modified to phosphoserine: Ser-49, Ser-51, Ser-79, Ser-81, and Ser-83. The interval 58 to 115 is disordered; that stretch reads VADPVEVPVARLPAPAKPEQDSDSDSEGAAEGPAGAPRTLVRRRRRRLLDPGEAPVVP. The segment covering 86–96 has biased composition (low complexity); it reads AAEGPAGAPRT. Ser-118 carries the post-translational modification Phosphoserine. Lys-120 is covalently cross-linked (Glycyl lysine isopeptide (Lys-Gly) (interchain with G-Cter in SUMO2)). Residues 136–206 form a disordered region; it reads KLCPSEPEDE…SSRNKSRKHT (71 aa). Residues 168 to 227 are a coiled coil; that stretch reads RKKLRKKCEKEEKKMEEFPDQDISPLPQPSSRNKSRKHTEALQKLREVNKRLQDLRSCLS. Positions 175–184 are enriched in basic and acidic residues; it reads CEKEEKKMEE. Residues Ser-191, Ser-197, and Ser-307 each carry the phosphoserine modification. Phosphothreonine is present on residues Thr-309 and Thr-311. Positions 341–412 constitute a Ubiquitin-like domain; it reads LRLRVQGKEK…ESGDLIEVWG (72 aa). 2 positions are modified to phosphoserine: Ser-362 and Ser-383.

In terms of assembly, interacts with NFATC2, TRAF1, TRAF2 and PRMT1. Interacts with UBE2I/UBC9. In terms of processing, methylation at the N-terminus by PRMT1 modulates interaction with the NFAT complex and results in augmented cytokine production. Highest level detected in spleen, thymus and testis.

The protein resides in the nucleus. It localises to the cytoplasm. In terms of biological role, in T-helper 2 (Th2) cells, regulates the magnitude of NFAT-driven transcription of a specific subset of cytokine genes, including IL3, IL4, IL5 and IL13, but not IL2. Recruits PRMT1 to the IL4 promoter; this leads to enhancement of histone H4 'Arg-3'-methylation and facilitates subsequent histone acetylation at the IL4 locus, thus promotes robust cytokine expression. Down-regulates formation of poly-SUMO chains by UBE2I/UBC9. The sequence is that of NFATC2-interacting protein (Nfatc2ip) from Mus musculus (Mouse).